Here is a 97-residue protein sequence, read N- to C-terminus: Putative pterin-4-alpha-carbinolamine dehydratase (97 aa).

It belongs to the pterin-4-alpha-carbinolamine dehydratase family.

The catalysed reaction is (4aS,6R)-4a-hydroxy-L-erythro-5,6,7,8-tetrahydrobiopterin = (6R)-L-erythro-6,7-dihydrobiopterin + H2O. This Saccharolobus solfataricus (strain ATCC 35092 / DSM 1617 / JCM 11322 / P2) (Sulfolobus solfataricus) protein is Putative pterin-4-alpha-carbinolamine dehydratase.